Consider the following 203-residue polypeptide: Holliday junction branch migration complex subunit RuvA (203 aa).

Positions 1–61 (MIIYKYGKIM…EYTKVTYGFD (61 aa)) are domain I. The interval 62–139 (NFKELVIFED…KFMKKLTSDE (78 aa)) is domain II. A flexible linker region spans residues 140–147 (AAKIKVPA). Residues 147-203 (ASSENENKFLDTMKMLGFKQQQIKFALDKIELNDDIETCVENAIKLISQQQHETSRV) are domain III.

Belongs to the RuvA family. As to quaternary structure, homotetramer. Forms an RuvA(8)-RuvB(12)-Holliday junction (HJ) complex. HJ DNA is sandwiched between 2 RuvA tetramers; dsDNA enters through RuvA and exits via RuvB. An RuvB hexamer assembles on each DNA strand where it exits the tetramer. Each RuvB hexamer is contacted by two RuvA subunits (via domain III) on 2 adjacent RuvB subunits; this complex drives branch migration. In the full resolvosome a probable DNA-RuvA(4)-RuvB(12)-RuvC(2) complex forms which resolves the HJ.

Its subcellular location is the cytoplasm. Functionally, the RuvA-RuvB-RuvC complex processes Holliday junction (HJ) DNA during genetic recombination and DNA repair, while the RuvA-RuvB complex plays an important role in the rescue of blocked DNA replication forks via replication fork reversal (RFR). RuvA specifically binds to HJ cruciform DNA, conferring on it an open structure. The RuvB hexamer acts as an ATP-dependent pump, pulling dsDNA into and through the RuvAB complex. HJ branch migration allows RuvC to scan DNA until it finds its consensus sequence, where it cleaves and resolves the cruciform DNA. In Metamycoplasma arthritidis (strain 158L3-1) (Mycoplasma arthritidis), this protein is Holliday junction branch migration complex subunit RuvA.